The following is a 102-amino-acid chain: Large ribosomal subunit protein bL21 (102 aa).

Belongs to the bacterial ribosomal protein bL21 family. Part of the 50S ribosomal subunit. Contacts protein L20.

This protein binds to 23S rRNA in the presence of protein L20. The protein is Large ribosomal subunit protein bL21 of Onion yellows phytoplasma (strain OY-M).